We begin with the raw amino-acid sequence, 175 residues long: Apoptosis regulatory protein Siva (175 aa).

Position 34 is a phosphotyrosine; by ABL2 (Tyr-34). An interaction with BCL2L1 isoform Bcl-x(L) and inhibition of BCL2L1 anti-apoptotic activity region spans residues 36–55; the sequence is QEVFEKTKRLLFLGAQAYLD. At Ser-70 the chain carries Phosphoserine. Positions 105–123 are interaction with coxsackievirus B3 VP2; that stretch reads DPSGVASIACSSCVRAVDG.

As to quaternary structure, binds through its N-terminal region to the C-terminus of CD27 and to PXMP2/PMP22. Binds to the C-terminus of TNFRSF18/GITR. Isoform 1 binds to BCL2L1/BCLX isoform Bcl-x(L) but not to BAX. In terms of assembly, (Microbial infection) Interacts with coxsackievirus B3 capsid protein VP2; this interaction inhibits the binding of SIVA1 to CD27. Zn(2+) is required as a cofactor. Phosphorylated by ABL2/ARG in response to oxidative stress. Ubiquitous. Mostly expressed in thymus, testis, ovary, prostate, small intestine and spleen and less in colon.

It is found in the cytoplasm. The protein localises to the nucleus. Functionally, induces CD27-mediated apoptosis. Inhibits BCL2L1 isoform Bcl-x(L) anti-apoptotic activity. Inhibits activation of NF-kappa-B and promotes T-cell receptor-mediated apoptosis. The sequence is that of Apoptosis regulatory protein Siva (SIVA1) from Homo sapiens (Human).